Consider the following 214-residue polypeptide: CASP-like protein UU5 (214 aa).

The segment at 1-20 (MSTVAQDSAPGGGKIQDAME) is disordered. The Cytoplasmic portion of the chain corresponds to 1 to 57 (MSTVAQDSAPGGGKIQDAMEQGAPGASSAAVVPEGGHYTQTPSPAFQAVKKNINHMS). The chain crosses the membrane as a helical span at residues 58–78 (AFSLGLRVAEFVLSVIAFSLM). The Extracellular segment spans residues 79–99 (ASADQNGAVYSTFTSYSFVLA). The chain crosses the membrane as a helical span at residues 100-120 (VNVLVVFYTIGQIIMSVLLLV). Residues 121 to 138 (SGSTPKKIYLFITFGCDQ) lie on the Cytoplasmic side of the membrane. The chain crosses the membrane as a helical span at residues 139-159 (LSAFLLMAAGAAGASVALIIN). The Extracellular portion of the chain corresponds to 160-193 (RGGVTDAYGNGCIDGKITSFCSHAQASVAFTFLS). The chain crosses the membrane as a helical span at residues 194–214 (FFCMVISSLLGVYSLAPYLIL).

The protein belongs to the Casparian strip membrane proteins (CASP) family. In terms of assembly, homodimer and heterodimers.

It localises to the cell membrane. The sequence is that of CASP-like protein UU5 from Physcomitrium patens (Spreading-leaved earth moss).